The following is a 538-amino-acid chain: Putative cysteine ligase BshC (538 aa).

A coiled-coil region spans residues 248–268 (ISKYKEVQEGLRNQQEVIKEL).

Belongs to the BshC family.

Functionally, involved in bacillithiol (BSH) biosynthesis. May catalyze the last step of the pathway, the addition of cysteine to glucosamine malate (GlcN-Mal) to generate BSH. The protein is Putative cysteine ligase BshC of Bacillus cereus (strain G9842).